A 201-amino-acid chain; its full sequence is Proteasome subunit beta 1 (201 aa).

Met-1 is a propeptide (removed in mature form; by autocatalysis). The Nucleophile role is filled by Thr-2.

Belongs to the peptidase T1B family. In terms of assembly, the 20S proteasome core is composed of 14 alpha and 14 beta subunits that assemble into four stacked heptameric rings, resulting in a barrel-shaped structure. The two inner rings, each composed of seven catalytic beta subunits, are sandwiched by two outer rings, each composed of seven alpha subunits. The catalytic chamber with the active sites is on the inside of the barrel. Has a gated structure, the ends of the cylinder being occluded by the N-termini of the alpha-subunits. Is capped at one or both ends by the proteasome regulatory ATPase, PAN.

It localises to the cytoplasm. It carries out the reaction Cleavage of peptide bonds with very broad specificity.. Its activity is regulated as follows. The formation of the proteasomal ATPase PAN-20S proteasome complex, via the docking of the C-termini of PAN into the intersubunit pockets in the alpha-rings, triggers opening of the gate for substrate entry. Interconversion between the open-gate and close-gate conformations leads to a dynamic regulation of the 20S proteasome proteolysis activity. Its function is as follows. Component of the proteasome core, a large protease complex with broad specificity involved in protein degradation. In Pyrobaculum neutrophilum (strain DSM 2338 / JCM 9278 / NBRC 100436 / V24Sta) (Thermoproteus neutrophilus), this protein is Proteasome subunit beta 1.